Consider the following 1396-residue polypeptide: ABC-type transporter cicA (1396 aa).

The interval Met-1–Gln-40 is disordered. Low complexity predominate over residues Thr-18–Ser-29. Helical transmembrane passes span Phe-142 to Leu-162, Gly-191 to Leu-211, and Met-300 to Val-320. The region spanning Leu-143 to Asp-466 is the ABC transmembrane type-1 1 domain. N-linked (GlcNAc...) asparagine glycosylation occurs at Asn-321. The next 3 helical transmembrane spans lie at Tyr-324–Val-344, Ile-409–Ala-429, and Ile-440–Val-460. Residues Ala-510 to Ala-533 show a composition bias toward basic and acidic residues. Residues Ala-510–Pro-543 are disordered. An ABC transporter 1 domain is found at Arg-525–Thr-751. ATP is bound at residue Gly-563 to Ser-570. An N-linked (GlcNAc...) asparagine glycan is attached at Asn-604. Positions Thr-751 to Met-787 are disordered. Positions Lys-757 to Ala-771 are enriched in acidic residues. Transmembrane regions (helical) follow at residues Leu-816–Leu-836 and Tyr-852–Thr-872. The ABC transmembrane type-1 2 domain occupies Leu-816–Asn-1093. N-linked (GlcNAc...) asparagine glycosylation is present at Asn-880. 4 helical membrane passes run Met-930 to Val-947, Tyr-951 to Tyr-970, Leu-1036 to Val-1056, and Ser-1065 to Val-1085. 3 N-linked (GlcNAc...) asparagine glycosylation sites follow: Asn-1096, Asn-1150, and Asn-1154. The ABC transporter 2 domain maps to Ile-1131–Glu-1380. Residue Gly-1165–Ser-1172 coordinates ATP.

The protein belongs to the ABC transporter superfamily. ABCC family. Conjugate transporter (TC 3.A.1.208) subfamily.

It is found in the cell membrane. In terms of biological role, ABC-type transporter; part of the gene cluster that mediates the biosynthesis of cichorine, a phytotoxin active against knapweed, corn, and soybeans. CicA is probably involved in the secretion of cichorine. The chain is ABC-type transporter cicA from Emericella nidulans (strain FGSC A4 / ATCC 38163 / CBS 112.46 / NRRL 194 / M139) (Aspergillus nidulans).